A 310-amino-acid chain; its full sequence is Ribosomal RNA small subunit methyltransferase H (310 aa).

S-adenosyl-L-methionine-binding positions include 33–35 (GGH), Asp-52, Phe-79, Asp-98, and Gln-105.

The protein belongs to the methyltransferase superfamily. RsmH family.

Its subcellular location is the cytoplasm. It catalyses the reaction cytidine(1402) in 16S rRNA + S-adenosyl-L-methionine = N(4)-methylcytidine(1402) in 16S rRNA + S-adenosyl-L-homocysteine + H(+). Functionally, specifically methylates the N4 position of cytidine in position 1402 (C1402) of 16S rRNA. The sequence is that of Ribosomal RNA small subunit methyltransferase H from Campylobacter jejuni (strain RM1221).